Here is an 816-residue protein sequence, read N- to C-terminus: DNA helicase MCM8 (816 aa).

The interval 1–52 is disordered; it reads MNGKYRGRGFGQGRFQSWKSGRGGRGFSGKWREREHRPDLNKATGKHPEQTP. Positions 30–40 are enriched in basic and acidic residues; sequence KWREREHRPDL. An MCM domain is found at 378–585; it reads LFKLIVNSLC…DHDHLLSEHV (208 aa). 430-437 is a binding site for ATP; it reads GDPGLGKS. At Ser-606 the chain carries Phosphoserine.

It belongs to the MCM family. Component of the MCM8-MCM9 complex, which forms a hexamer composed of MCM8 and MCM9. Interacts with the DNA mismatch repair (MMR) complex composed at least of MSH2, MSH3, MSH6, PMS1 and MLH1. Interacts with RAD51; the interaction recruits RAD51 to DNA damage sites. Interacts with the MRN complex composed of MRE11, RAD50 and NBN/NBS1. Interacts with CDC6 and ORC2. Interacts with HROB; the interaction recruits the MCM8-MCM9 complex to DNA damage sites.

The protein localises to the nucleus. It localises to the chromosome. It carries out the reaction ATP + H2O = ADP + phosphate + H(+). Its function is as follows. Component of the MCM8-MCM9 complex, a complex involved in the repair of double-stranded DNA breaks (DBSs) and DNA interstrand cross-links (ICLs) by homologous recombination (HR). Required for DNA resection by the MRE11-RAD50-NBN/NBS1 (MRN) complex by recruiting the MRN complex to the repair site and by promoting the complex nuclease activity. Probably by regulating the localization of the MNR complex, indirectly regulates the recruitment of downstream effector RAD51 to DNA damage sites including DBSs and ICLs. The MCM8-MCM9 complex is dispensable for DNA replication and S phase progression. However, may play a non-essential for DNA replication: may be involved in the activation of the prereplicative complex (pre-RC) during G(1) phase by recruiting CDC6 to the origin recognition complex (ORC). Probably by regulating HR, plays a key role during gametogenesis. Stabilizes MCM9 protein. This Bos taurus (Bovine) protein is DNA helicase MCM8 (MCM8).